The primary structure comprises 477 residues: Peptidyl-prolyl cis-trans isomerase FKBP53 (477 aa).

Disordered stretches follow at residues 104-135 (DYEH…EDEQ) and 153-366 (AAAP…QVRT). Residues 264–274 (KSKKKKNQKEK) show a composition bias toward basic residues. Residues 299–321 (ISQISSNTKAQDGTANNAMSESS) show a composition bias toward polar residues. A compositionally biased stretch (basic and acidic residues) spans 322–331 (KTPDKSAEKK). Polar residues predominate over residues 351-366 (VEKQTPADSKSSQVRT). The region spanning 389–477 (GKTVSVRYIG…TFDVELINVQ (89 aa)) is the PPIase FKBP-type domain.

This sequence belongs to the FKBP-type PPIase family. In terms of assembly, interacts with histone H3. As to expression, broadly expressed in leaves, flowers, stems and roots. Detected in root apical meristem region and pollen.

The protein resides in the nucleus. It carries out the reaction [protein]-peptidylproline (omega=180) = [protein]-peptidylproline (omega=0). PPIases accelerate the folding of proteins. It catalyzes the cis-trans isomerization of proline imidic peptide bonds in oligopeptides. Histone chaperone possibly involved in H3/H4 deposition to the nucleosome. Associates with 18S rDNA chromatin and negatively regulates the level of its expression. This chain is Peptidyl-prolyl cis-trans isomerase FKBP53 (FKBP53), found in Arabidopsis thaliana (Mouse-ear cress).